The following is a 483-amino-acid chain: Chromosomal replication initiator protein DnaA (483 aa).

The interval 1–71 (MKEFWQTCVS…EALAAEWYQR (71 aa)) is domain I, interacts with DnaA modulators. The segment at 71 to 145 (RPVQVQFELP…DAANIVYERS (75 aa)) is domain II. The domain III, AAA+ region stretch occupies residues 146 to 362 (RLNTDLTFEN…GALRKVLAYA (217 aa)). Residues G190, G192, K193, and T194 each coordinate ATP. Positions 363-483 (RFHGREALNV…LHVLEQTLKG (121 aa)) are domain IV, binds dsDNA.

It belongs to the DnaA family. As to quaternary structure, oligomerizes as a right-handed, spiral filament on DNA at oriC.

It is found in the cytoplasm. Plays an essential role in the initiation and regulation of chromosomal replication. ATP-DnaA binds to the origin of replication (oriC) to initiate formation of the DNA replication initiation complex once per cell cycle. Binds the DnaA box (a 9 base pair repeat at the origin) and separates the double-stranded (ds)DNA. Forms a right-handed helical filament on oriC DNA; dsDNA binds to the exterior of the filament while single-stranded (ss)DNA is stabiized in the filament's interior. The ATP-DnaA-oriC complex binds and stabilizes one strand of the AT-rich DNA unwinding element (DUE), permitting loading of DNA polymerase. After initiation quickly degrades to an ADP-DnaA complex that is not apt for DNA replication. Binds acidic phospholipids. This chain is Chromosomal replication initiator protein DnaA, found in Bordetella avium (strain 197N).